We begin with the raw amino-acid sequence, 906 residues long: Coatomer subunit beta' (906 aa).

WD repeat units lie at residues A13–T52, V55–M94, A97–Q136, G140–T180, G183–T224, G227–T266, S350–F388, and S390–K425. The residue at position 627 (K627) is an N6-acetyllysine. The WD 9 repeat unit spans residues I746–K783. The interval E837 to V863 is disordered. S859 carries the post-translational modification Phosphoserine. A Phosphothreonine modification is found at T861. Residues A866–V890 are a coiled coil.

Belongs to the WD repeat COPB2 family. Oligomeric complex that consists of at least the alpha, beta, beta', gamma, delta, epsilon and zeta subunits. Probably interacts with PEX11A. Interacts with SCYL1. Interacts with JAGN1.

The protein localises to the cytoplasm. The protein resides in the cytosol. It is found in the golgi apparatus membrane. Its subcellular location is the cytoplasmic vesicle. It localises to the COPI-coated vesicle membrane. Functionally, the coatomer is a cytosolic protein complex that binds to dilysine motifs and reversibly associates with Golgi non-clathrin-coated vesicles, which further mediate biosynthetic protein transport from the ER, via the Golgi up to the trans Golgi network. Coatomer complex is required for budding from Golgi membranes, and is essential for the retrograde Golgi-to-ER transport of dilysine-tagged proteins. In mammals, the coatomer can only be recruited by membranes associated to ADP-ribosylation factors (ARFs), which are small GTP-binding proteins; the complex also influences the Golgi structural integrity, as well as the processing, activity, and endocytic recycling of LDL receptors. In terms of biological role, this coatomer complex protein, essential for Golgi budding and vesicular trafficking, is a selective binding protein (RACK) for protein kinase C, epsilon type. It binds to Golgi membranes in a GTP-dependent manner. The chain is Coatomer subunit beta' (COPB2) from Pongo abelii (Sumatran orangutan).